The chain runs to 190 residues: Protein GrpE (190 aa).

It belongs to the GrpE family. As to quaternary structure, homodimer.

The protein resides in the cytoplasm. Its function is as follows. Participates actively in the response to hyperosmotic and heat shock by preventing the aggregation of stress-denatured proteins, in association with DnaK and GrpE. It is the nucleotide exchange factor for DnaK and may function as a thermosensor. Unfolded proteins bind initially to DnaJ; upon interaction with the DnaJ-bound protein, DnaK hydrolyzes its bound ATP, resulting in the formation of a stable complex. GrpE releases ADP from DnaK; ATP binding to DnaK triggers the release of the substrate protein, thus completing the reaction cycle. Several rounds of ATP-dependent interactions between DnaJ, DnaK and GrpE are required for fully efficient folding. This chain is Protein GrpE, found in Streptococcus agalactiae serotype III (strain NEM316).